Reading from the N-terminus, the 1457-residue chain is Receptor-type tyrosine-protein phosphatase kappa (1457 aa).

An N-terminal signal peptide occupies residues 1–25 (MDVAAAALPAFVALWLLYPWPLLGS). Residues 26–752 (ALGQFSAGGC…PAKQTDRVVK (727 aa)) lie on the Extracellular side of the membrane. The MAM domain maps to 30 to 193 (FSAGGCTFDD…IQVLSYPCDK (164 aa)). N-linked (GlcNAc...) asparagine glycosylation is found at Asn100, Asn139, and Asn210. Residues 195 to 280 (PHFLRLGDVE…TQSERGSGVS (86 aa)) form the Ig-like C2-type domain. Cys215 and Cys269 are disulfide-bonded. Fibronectin type-III domains follow at residues 293 to 388 (PIAP…CAEP), 391 to 487 (TPKT…TDED), 490 to 594 (GPVP…SAPS), and 595 to 688 (LPDY…TVGD). 9 N-linked (GlcNAc...) asparagine glycosylation sites follow: Asn415, Asn423, Asn435, Asn461, Asn551, Asn585, Asn589, Asn606, and Asn689. Residues 753–774 (IAGISAGILVFILLLLVVIVIV) form a helical membrane-spanning segment. The Cytoplasmic portion of the chain corresponds to 775–1457 (KKSKLAKKRK…DVALEYLESS (683 aa)). Position 868 is a phosphoserine (Ser868). 2 consecutive Tyrosine-protein phosphatase domains span residues 899–1159 (FKEE…ILEA) and 1191–1453 (LKDE…ALEY). Substrate is bound by residues Asp1068, 1100–1106 (CSAGAGR), and Gln1144. Cys1100 acts as the Phosphocysteine intermediate in catalysis. Cys1394 (phosphocysteine intermediate) is an active-site residue.

This sequence belongs to the protein-tyrosine phosphatase family. Receptor class 2B subfamily. In terms of processing, this protein undergoes proteolytic processing. In terms of tissue distribution, high levels in liver and kidney. Lower levels in lung, brain and heart. Not seen in spleen and testis.

It is found in the membrane. It catalyses the reaction O-phospho-L-tyrosyl-[protein] + H2O = L-tyrosyl-[protein] + phosphate. In terms of biological role, regulation of processes involving cell contact and adhesion such as growth control, tumor invasion, and metastasis. Negative regulator of EGFR signaling pathway. Forms complexes with beta-catenin and gamma-catenin/plakoglobin. Beta-catenin may be a substrate for the catalytic activity of PTPRK/PTP-kappa. The protein is Receptor-type tyrosine-protein phosphatase kappa (Ptprk) of Mus musculus (Mouse).